The chain runs to 470 residues: Putative multidrug resistance protein MdtD (470 aa).

Over 1-11 the chain is Periplasmic; that stretch reads MTELPDNTRWQ. The chain crosses the membrane as a helical span at residues 12–32; sequence LWIVAFGFFMQSLDTTIVNTA. The Cytoplasmic segment spans residues 33–48; that stretch reads LPSMAKSLGESPLHMH. The helical transmembrane segment at 49 to 69 threads the bilayer; sequence MVVVSYVLTVAVMLPASGWLA. Residues 70-76 are Periplasmic-facing; the sequence is DKIGVRN. The chain crosses the membrane as a helical span at residues 77–97; sequence IFFAAIVLFTLGSLFCALSGT. The Cytoplasmic segment spans residues 98–101; that stretch reads LNQL. The helical transmembrane segment at 102–124 threads the bilayer; sequence VLARVLQGVGGAMMVPVGRLTVM. The Periplasmic portion of the chain corresponds to 125–137; it reads KIVPRAQYMAAMT. Residues 138–158 traverse the membrane as a helical segment; it reads FVTLPGQIGPLLGPALGGVLV. Residues 159 to 164 are Cytoplasmic-facing; the sequence is EYASWH. Residues 165–185 traverse the membrane as a helical segment; that stretch reads WIFLINIPVGIVGAMATFMLM. The Periplasmic segment spans residues 186–196; the sequence is PNYTIETRRFD. The helical transmembrane segment at 197-217 threads the bilayer; that stretch reads LPGFLLLAIGMAVLTLALDGS. Topologically, residues 218 to 224 are cytoplasmic; that stretch reads KSMGISP. A helical membrane pass occupies residues 225–245; it reads WTLAGLAAGGAAAILLYLFHA. Residues 246 to 262 are Periplasmic-facing; sequence KKNSGALFSLRLFRTPT. Residues 263-283 traverse the membrane as a helical segment; it reads FSLGLLGSFAGRIGSGMLPFM. Topologically, residues 284-285 are cytoplasmic; sequence TP. A helical transmembrane segment spans residues 286 to 306; the sequence is VFLQIGLGFSPFHAGLMMIPM. At 307-341 the chain is on the periplasmic side; sequence VLGSMGMKRIVVQIVNRFGYRRVLVATTLGLALVS. A helical transmembrane segment spans residues 342–362; sequence LLFMSVALLGWYYLLPLVLLL. At 363–395 the chain is on the cytoplasmic side; sequence QGMVNSARFSSMNTLTLKDLPDTLASSGNSLLS. Residues 396–416 traverse the membrane as a helical segment; sequence MIMQLSMSIGVTIAGMLLGMF. The Periplasmic segment spans residues 417–430; the sequence is GQQHIGIDSSATHH. Residues 431–451 traverse the membrane as a helical segment; it reads VFMYTWLCMAVIIALPAIIFA. Topologically, residues 452–470 are cytoplasmic; sequence RVPNDTQQNMVISRRKRSL.

The protein belongs to the major facilitator superfamily. TCR/Tet family.

The protein resides in the cell inner membrane. This is Putative multidrug resistance protein MdtD from Salmonella agona (strain SL483).